Here is a 386-residue protein sequence, read N- to C-terminus: Protein MGF 360-4L (386 aa).

It belongs to the asfivirus MGF 360 family.

Functionally, plays a role in virus cell tropism, and may be required for efficient virus replication in macrophages. The sequence is that of Protein MGF 360-4L from African swine fever virus (isolate Warthog/Namibia/Wart80/1980) (ASFV).